The following is a 318-amino-acid chain: Acetyl-coenzyme A carboxylase carboxyl transferase subunit alpha (318 aa).

The 258-residue stretch at 36–293 folds into the CoA carboxyltransferase C-terminal domain; the sequence is EIDRLKEKST…KTRLSEQLDQ (258 aa).

Belongs to the AccA family. Acetyl-CoA carboxylase is a heterohexamer composed of biotin carboxyl carrier protein (AccB), biotin carboxylase (AccC) and two subunits each of ACCase subunit alpha (AccA) and ACCase subunit beta (AccD).

It is found in the cytoplasm. The enzyme catalyses N(6)-carboxybiotinyl-L-lysyl-[protein] + acetyl-CoA = N(6)-biotinyl-L-lysyl-[protein] + malonyl-CoA. It participates in lipid metabolism; malonyl-CoA biosynthesis; malonyl-CoA from acetyl-CoA: step 1/1. Functionally, component of the acetyl coenzyme A carboxylase (ACC) complex. First, biotin carboxylase catalyzes the carboxylation of biotin on its carrier protein (BCCP) and then the CO(2) group is transferred by the carboxyltransferase to acetyl-CoA to form malonyl-CoA. The protein is Acetyl-coenzyme A carboxylase carboxyl transferase subunit alpha of Teredinibacter turnerae (strain ATCC 39867 / T7901).